The sequence spans 452 residues: Fructose-2,6-bisphosphatase (452 aa).

The tract at residues 1 to 223 (MGYSTISNDN…VFYVMNIRPK (223 aa)) is 6-phosphofructo-2-kinase. 20 to 28 (GLPARGKSF) is an ATP binding site. Beta-D-fructose 6-phosphate contacts are provided by Arg53 and Arg78. Asp104 is an active-site residue. 2 residues coordinate beta-D-fructose 6-phosphate: Thr106 and Arg112. 143-148 (NAKDIG) is an ATP binding site. 2 residues coordinate beta-D-fructose 6-phosphate: Arg169 and Tyr173. Residues 224 to 452 (PKYIWLSRHG…LNDSPLEDKF (229 aa)) are fructose-2,6-bisphosphatase. Residue Arg231 coordinates beta-D-fructose 2,6-bisphosphate. His232 serves as the catalytic Tele-phosphohistidine intermediate. 2 residues coordinate beta-D-fructose 2,6-bisphosphate: Asn238 and Gly244. Glu302 (proton donor/acceptor) is an active-site residue. Beta-D-fructose 2,6-bisphosphate is bound by residues Tyr313, Arg327, Lys331, Tyr342, Gln368, and Arg372. 324 to 327 (FKAR) contacts ATP. ATP is bound by residues 368-372 (QAVLR) and Tyr404. Phosphoserine occurs at positions 435 and 446.

This sequence in the C-terminal section; belongs to the phosphoglycerate mutase family.

The catalysed reaction is beta-D-fructose 2,6-bisphosphate + H2O = beta-D-fructose 6-phosphate + phosphate. Its activity is regulated as follows. Inhibited by fructose 6-P, activated by glycerol 3-P. Monofunctional, high-specificity fructose-2,6-bisphosphatase, which releases phosphate from the 2-position of fructose 2,6-bisphosphate. Has no detectable 6-phosphofructo-2-kinase activity. The protein is Fructose-2,6-bisphosphatase of Saccharomyces cerevisiae (strain ATCC 204508 / S288c) (Baker's yeast).